The chain runs to 953 residues: Isoleucine--tRNA ligase (953 aa).

Residues 58–68 (PYANGSIHIGH) carry the 'HIGH' region motif. Glu577 is a binding site for L-isoleucyl-5'-AMP. The short motif at 618 to 622 (KMSKS) is the 'KMSKS' region element. Residue Lys621 participates in ATP binding. Positions 916, 919, 936, and 939 each coordinate Zn(2+).

This sequence belongs to the class-I aminoacyl-tRNA synthetase family. IleS type 1 subfamily. As to quaternary structure, monomer. It depends on Zn(2+) as a cofactor.

Its subcellular location is the cytoplasm. It catalyses the reaction tRNA(Ile) + L-isoleucine + ATP = L-isoleucyl-tRNA(Ile) + AMP + diphosphate. In terms of biological role, catalyzes the attachment of isoleucine to tRNA(Ile). As IleRS can inadvertently accommodate and process structurally similar amino acids such as valine, to avoid such errors it has two additional distinct tRNA(Ile)-dependent editing activities. One activity is designated as 'pretransfer' editing and involves the hydrolysis of activated Val-AMP. The other activity is designated 'posttransfer' editing and involves deacylation of mischarged Val-tRNA(Ile). This is Isoleucine--tRNA ligase from Aeromonas salmonicida (strain A449).